The sequence spans 378 residues: S-adenosylmethionine:tRNA ribosyltransferase-isomerase (378 aa).

The protein belongs to the QueA family. In terms of assembly, monomer.

It localises to the cytoplasm. It carries out the reaction 7-aminomethyl-7-carbaguanosine(34) in tRNA + S-adenosyl-L-methionine = epoxyqueuosine(34) in tRNA + adenine + L-methionine + 2 H(+). It participates in tRNA modification; tRNA-queuosine biosynthesis. Transfers and isomerizes the ribose moiety from AdoMet to the 7-aminomethyl group of 7-deazaguanine (preQ1-tRNA) to give epoxyqueuosine (oQ-tRNA). This is S-adenosylmethionine:tRNA ribosyltransferase-isomerase from Prochlorococcus marinus (strain MIT 9312).